Here is a 240-residue protein sequence, read N- to C-terminus: Pyridoxine 5'-phosphate synthase (240 aa).

Asn-7 is a binding site for 3-amino-2-oxopropyl phosphate. A 1-deoxy-D-xylulose 5-phosphate-binding site is contributed by 9–10 (DH). Residue Arg-18 participates in 3-amino-2-oxopropyl phosphate binding. His-43 serves as the catalytic Proton acceptor. 1-deoxy-D-xylulose 5-phosphate-binding residues include Arg-45 and His-50. The Proton acceptor role is filled by Glu-70. Residue Thr-100 coordinates 1-deoxy-D-xylulose 5-phosphate. The Proton donor role is filled by His-191. Residues Gly-192 and 213-214 (GH) contribute to the 3-amino-2-oxopropyl phosphate site.

It belongs to the PNP synthase family. Homooctamer; tetramer of dimers.

It is found in the cytoplasm. It catalyses the reaction 3-amino-2-oxopropyl phosphate + 1-deoxy-D-xylulose 5-phosphate = pyridoxine 5'-phosphate + phosphate + 2 H2O + H(+). It participates in cofactor biosynthesis; pyridoxine 5'-phosphate biosynthesis; pyridoxine 5'-phosphate from D-erythrose 4-phosphate: step 5/5. Functionally, catalyzes the complicated ring closure reaction between the two acyclic compounds 1-deoxy-D-xylulose-5-phosphate (DXP) and 3-amino-2-oxopropyl phosphate (1-amino-acetone-3-phosphate or AAP) to form pyridoxine 5'-phosphate (PNP) and inorganic phosphate. This Synechococcus elongatus (strain ATCC 33912 / PCC 7942 / FACHB-805) (Anacystis nidulans R2) protein is Pyridoxine 5'-phosphate synthase.